A 200-amino-acid chain; its full sequence is Large ribosomal subunit protein uL4 (200 aa).

A disordered region spans residues 42-69 (SKAQKNRSDVSGGGRKPWRQKGTGRARA).

The protein belongs to the universal ribosomal protein uL4 family. As to quaternary structure, part of the 50S ribosomal subunit.

Functionally, one of the primary rRNA binding proteins, this protein initially binds near the 5'-end of the 23S rRNA. It is important during the early stages of 50S assembly. It makes multiple contacts with different domains of the 23S rRNA in the assembled 50S subunit and ribosome. In terms of biological role, forms part of the polypeptide exit tunnel. The sequence is that of Large ribosomal subunit protein uL4 from Alcanivorax borkumensis (strain ATCC 700651 / DSM 11573 / NCIMB 13689 / SK2).